A 506-amino-acid chain; its full sequence is MGFERAFVESSPEQENKLFVGVSYMDSSNKNQDPSESNNQISFGGQHQHHQQQFFYNHHQQQQLQNNNQVSFGMMQQSSSAIPGSLISKDSAGAYDLGELDQALFQYLDGQEPSSIQEQRQNSGMRPPTLNIFPSQPMHVEPSTTNKMNTGLVSPAISGSKRSSQPSMELSNNLKNNDAPSASGPEPPKAAKREGNRKGPTSSSEQDAPKTPDPKTLRRLAQNREAARKSRLRKKAYVQQLESSRIRLTQLEQELQRARAQGYYFGGNSLLGGEQNLPVNLANMSSDAAVFDMEYARWLEEHHRLMCELRNAVQEHFPENELRIYVDNCVTHYDEIMNLKSMLTKSDVFHLVSGMWKTPAERCFMWMGGFRPSELLKIILSQIEPLTEQQLMGICGLQQSTQEAEDALSQGLEALNHSLSDTIASDALSCPQNMANYMGQMALAMNKLSTLEGFVRQADNLRHQTIHRLHQLLTTRQAARCFLAIAEYFHRLRALSSLWHARPRQE.

2 disordered regions span residues 22–50 (VSYM…HQHH) and 113–218 (PSSI…KTLR). 4 stretches are compositionally biased toward polar residues: residues 25 to 45 (MDSS…SFGG), 113 to 124 (PSSIQEQRQNSG), 142 to 152 (PSTTNKMNTGL), and 160 to 180 (SKRS…NDAP). The span at 207–216 (DAPKTPDPKT) shows a compositional bias: basic and acidic residues. A bZIP domain is found at 213 to 257 (DPKTLRRLAQNREAARKSRLRKKAYVQQLESSRIRLTQLEQELQR). Positions 215–235 (KTLRRLAQNREAARKSRLRKK) are basic motif. Residues 217–224 (LRRLAQNR) carry the Nuclear localization signal motif. The segment at 241–255 (LESSRIRLTQLEQEL) is leucine-zipper. The region spanning 288–502 (AAVFDMEYAR…RALSSLWHAR (215 aa)) is the DOG1 domain.

It belongs to the bZIP family. As to quaternary structure, binds DNA as a dimer. Interacts with TGA2.2. In terms of tissue distribution, specifically expressed in roots.

The protein resides in the nucleus. Transcription activator that binds to as1-like elements (5'-TGACGTAAgggaTGACGCA-3') in promoters of target genes. Regulates transcription in response to plant signaling molecules salicylic acid (SA), methyl jasmonate (MJ) and auxin (2,4D) only in leaves. Prevents lateral branching and may repress defense signaling. This Nicotiana tabacum (Common tobacco) protein is bZIP transcription factor TGA10.